Here is a 3564-residue protein sequence, read N- to C-terminus: CUB and sushi domain-containing protein 1 (3564 aa).

Positions Met1–Ala26 are cleaved as a signal peptide. The Extracellular segment spans residues Ala27 to Ser3487. 10 disulfides stabilise this stretch: Cys32-Cys58, Cys145-Cys185, Cys171-Cys202, Cys208-Cys234, Cys349-Cys389, Cys375-Cys406, Cys411-Cys437, Cys527-Cys567, Cys553-Cys580, and Cys584-Cys610. Residues Cys32–Leu140 form the CUB 1 domain. Residues Asn40 and Asn57 are each glycosylated (N-linked (GlcNAc...) asparagine). The region spanning His143–Ala204 is the Sushi 1 domain. In terms of domain architecture, CUB 2 spans Cys208–Lys312. Residues Asp347–Ala408 enclose the Sushi 2 domain. The CUB 3 domain occupies Cys411–Ile522. In terms of domain architecture, Sushi 3 spans Gly525–Phe582. Positions Cys584–Phe692 constitute a CUB 4 domain. N-linked (GlcNAc...) asparagine glycosylation is found at Asn587 and Asn686. A Sushi 4 domain is found at Asn695–Ala756. 6 disulfide bridges follow: Cys697–Cys738, Cys723–Cys754, Cys758–Cys784, Cys873–Cys913, Cys899–Cys926, and Cys930–Cys956. Residues Cys758 to Val866 form the CUB 5 domain. Positions Asp871–Ala928 constitute a Sushi 5 domain. The CUB 6 domain occupies Cys930 to Tyr1040. Residues Asn955, Asn1015, and Asn1034 are each glycosylated (N-linked (GlcNAc...) asparagine). In terms of domain architecture, Sushi 6 spans Glu1043 to Ala1102. 3 disulfide bridges follow: Cys1045–Cys1085, Cys1071–Cys1100, and Cys1104–Cys1130. A CUB 7 domain is found at Cys1104–Phe1212. N-linked (GlcNAc...) asparagine glycans are attached at residues Asn1184 and Asn1197. In terms of domain architecture, Sushi 7 spans Val1215–Ala1275. Disulfide bonds link Cys1217–Cys1258, Cys1244–Cys1273, Cys1277–Cys1304, Cys1391–Cys1431, Cys1417–Cys1447, Cys1451–Cys1477, Cys1564–Cys1604, Cys1590–Cys1621, Cys1625–Cys1651, Cys1741–Cys1781, Cys1767–Cys1798, and Cys1802–Cys1828. Residues Cys1277–Ser1386 enclose the CUB 8 domain. In terms of domain architecture, Sushi 8 spans Ala1389–Ala1449. The N-linked (GlcNAc...) asparagine glycan is linked to Asn1399. The region spanning Cys1451–Lys1559 is the CUB 9 domain. Residues Asn1454 and Asn1572 are each glycosylated (N-linked (GlcNAc...) asparagine). Positions Glu1562 to Ala1623 constitute a Sushi 9 domain. In terms of domain architecture, CUB 10 spans Cys1625–Val1733. N-linked (GlcNAc...) asparagine glycosylation occurs at Asn1644. Positions Thr1739–Val1800 constitute a Sushi 10 domain. N-linked (GlcNAc...) asparagine glycans are attached at residues Asn1792, Asn1805, and Asn1882. Residues Cys1802–Val1910 enclose the CUB 11 domain. In terms of domain architecture, Sushi 11 spans Ala1913–Ala1972. 3 cysteine pairs are disulfide-bonded: Cys1915–Cys1955, Cys1941–Cys1970, and Cys1974–Cys2000. Residues Cys1974–Tyr2082 form the CUB 12 domain. An N-linked (GlcNAc...) asparagine glycan is attached at Asn2018. Residues Gln2085 to Ala2144 enclose the Sushi 12 domain. 3 disulfide bridges follow: Cys2087/Cys2127, Cys2113/Cys2142, and Cys2146/Cys2172. The 112-residue stretch at Cys2146–Lys2257 folds into the CUB 13 domain. N-linked (GlcNAc...) asparagine glycosylation is found at Asn2149, Asn2154, and Asn2187. The Sushi 13 domain occupies Lys2256–Ala2317. 3 disulfide bridges follow: Cys2258/Cys2300, Cys2286/Cys2315, and Cys2319/Cys2347. The 112-residue stretch at Cys2319 to Pro2430 folds into the CUB 14 domain. Residues Asn2358, Asn2394, Asn2400, Asn2445, Asn2470, and Asn2503 are each glycosylated (N-linked (GlcNAc...) asparagine). 15 consecutive Sushi domains span residues Pro2430–Ala2492, Val2493–Pro2554, Val2555–Val2619, Ile2620–Ala2677, Gly2678–Pro2735, Ile2736–Val2793, Val2794–Ala2856, Ile2857–Gly2914, Gly2918–Ala2975, Val2976–Ile3034, Ile3035–Ala3094, Val3095–Pro3152, Val3153–Asp3210, Asn3214–Pro3272, and His3273–Ser3332. Disulfide bonds link Cys2432–Cys2473, Cys2459–Cys2490, Cys2495–Cys2537, Cys2521–Cys2552, Cys2557–Cys2602, Cys2588–Cys2617, Cys2622–Cys2662, Cys2648–Cys2675, Cys2680–Cys2720, Cys2706–Cys2733, Cys2738–Cys2778, and Cys2764–Cys2791. Residue Asn2605 is glycosylated (N-linked (GlcNAc...) asparagine). Asn2750 and Asn2761 each carry an N-linked (GlcNAc...) asparagine glycan. Asn2795 carries an N-linked (GlcNAc...) asparagine glycan. 18 disulfides stabilise this stretch: Cys2796–Cys2841, Cys2827–Cys2854, Cys2859–Cys2899, Cys2885–Cys2912, Cys2920–Cys2960, Cys2946–Cys2973, Cys2978–Cys3019, Cys3005–Cys3032, Cys3037–Cys3079, Cys3063–Cys3092, Cys3097–Cys3137, Cys3123–Cys3150, Cys3155–Cys3195, Cys3181–Cys3208, Cys3216–Cys3257, Cys3243–Cys3270, Cys3275–Cys3317, and Cys3302–Cys3330. An N-linked (GlcNAc...) asparagine glycan is attached at Asn2894. The N-linked (GlcNAc...) asparagine glycan is linked to Asn2963. Residues Asn3022 and Asn3056 are each glycosylated (N-linked (GlcNAc...) asparagine). Asn3105 carries N-linked (GlcNAc...) asparagine glycosylation. Asn3228 and Asn3260 each carry an N-linked (GlcNAc...) asparagine glycan. Asn3339, Asn3379, and Asn3386 each carry an N-linked (GlcNAc...) asparagine glycan. The helical transmembrane segment at Val3488–Leu3508 threads the bilayer. Over Tyr3509–Val3564 the chain is Cytoplasmic.

The protein belongs to the CSMD family. As to expression, weakly expressed in most tissues, except in brain. Expressed at intermediate level in brain, including cerebellum, substantia nigra, hippocampus and fetal brain.

The protein resides in the membrane. Potential suppressor of squamous cell carcinomas. The protein is CUB and sushi domain-containing protein 1 (CSMD1) of Homo sapiens (Human).